A 1186-amino-acid polypeptide reads, in one-letter code: Myelin transcription factor 1-like protein (1186 aa).

The segment at 1-21 (MEVDTEEKRHRTRSKGVRVPV) is disordered. The CCHHC-type 1 zinc-finger motif lies at 22-65 (EPAIQELFSCPTPGCDGSGHVSGKYARHRSVYGCPLAKKRKTQD). Zn(2+)-binding residues include Cys31, Cys36, His49, and Cys55. Disordered regions lie at residues 56-175 (PLAK…QMNC) and 220-247 (RTES…GRKS). Residues 86 to 169 (SVDECDDSDG…EEEEEEEENE (84 aa)) show a composition bias toward acidic residues. Ser250 carries the phosphoserine modification. 2 disordered regions span residues 342–372 (SETN…GRTP) and 449–513 (REKM…GCDG). Positions 343–357 (ETNPQERNPQQNMNI) are enriched in polar residues. Composition is skewed to basic and acidic residues over residues 361–372 (VRPEEDFPGRTP), 449–487 (REKM…DSHV), and 495–505 (DPSRTEKKESK). CCHHC-type zinc fingers lie at residues 497–540 (SRTE…PPEI) and 541–584 (LAMH…KLAK). Cys506, Cys511, His524, Cys530, Cys550, Cys555, His568, and Cys574 together coordinate Zn(2+). Disordered stretches follow at residues 659-709 (RAIA…GGGS) and 753-780 (KPQD…MNKQ). A compositionally biased stretch (basic and acidic residues) spans 666–683 (QTRDISPKGYDDAKRYCK). Residues 685 to 709 (PSPSSSSTSSYAPSSSSNLSCGGGS) are compositionally biased toward low complexity. CCHHC-type zinc fingers lie at residues 896 to 939 (LATS…GIRI), 945 to 988 (DKED…QKDG), and 998 to 1041 (KSVK…MKKA). Residues Cys905, Cys910, His923, Cys929, Cys954, Cys959, His972, Cys978, Cys1007, Cys1012, His1025, and Cys1031 each coordinate Zn(2+). A coiled-coil region spans residues 1056–1130 (SNGIENDEEI…LANLSQSLIH (75 aa)).

Belongs to the MYT1 family. Interacts with SIN3B.

The protein resides in the nucleus. Its subcellular location is the chromosome. In terms of biological role, transcription factor that plays a key role in neuronal differentiation by specifically repressing expression of non-neuronal genes during neuron differentiation. In contrast to other transcription repressors that inhibit specific lineages, mediates repression of multiple differentiation programs. Also represses expression of negative regulators of neurogenesis, such as members of the Notch signaling pathway, including HES1. The combination of three transcription factors, ASCL1, POU3F2/BRN2 and MYT1L, is sufficient to reprogram fibroblasts and other somatic cells into induced neuronal (iN) cells in vitro. Directly binds the 5'-AAGTT-3' core motif present on the promoter of target genes and represses transcription by recruiting a multiprotein complex containing SIN3B. The 5'-AAGTT-3' core motif is absent from the promoter of neural genes. The sequence is that of Myelin transcription factor 1-like protein from Homo sapiens (Human).